Reading from the N-terminus, the 430-residue chain is Type II methyltransferase M.Sau96I (430 aa).

The 55-residue stretch at 9–63 folds into the HTH cro/C1-type domain; sequence IEKMKNQNIKTQTELAEKIDISKSQLSFMFSDEYEPLKKNVIKLADVLKVSPNDI. The region spanning 99–429 is the SAM-dependent MTase C5-type domain; sequence YNVFETFAGA…KSLVHYLNQF (331 aa). C174 is a catalytic residue.

It belongs to the class I-like SAM-binding methyltransferase superfamily. C5-methyltransferase family.

The catalysed reaction is a 2'-deoxycytidine in DNA + S-adenosyl-L-methionine = a 5-methyl-2'-deoxycytidine in DNA + S-adenosyl-L-homocysteine + H(+). Its function is as follows. A methylase that recognizes the double-stranded sequence 5'-GGNCC-3', methylates C-4 on both strands, and protects the DNA from cleavage by the Sau96I endonuclease. This chain is Type II methyltransferase M.Sau96I, found in Staphylococcus aureus.